Here is a 366-residue protein sequence, read N- to C-terminus: tRNA/tmRNA (uracil-C(5))-methyltransferase (366 aa).

The S-adenosyl-L-methionine site is built by Gln190, Tyr218, Asn223, Glu239, and Asp299. Cys324 functions as the Nucleophile in the catalytic mechanism. Catalysis depends on Glu358, which acts as the Proton acceptor.

It belongs to the class I-like SAM-binding methyltransferase superfamily. RNA M5U methyltransferase family. TrmA subfamily.

It carries out the reaction uridine(54) in tRNA + S-adenosyl-L-methionine = 5-methyluridine(54) in tRNA + S-adenosyl-L-homocysteine + H(+). The catalysed reaction is uridine(341) in tmRNA + S-adenosyl-L-methionine = 5-methyluridine(341) in tmRNA + S-adenosyl-L-homocysteine + H(+). Its function is as follows. Dual-specificity methyltransferase that catalyzes the formation of 5-methyluridine at position 54 (m5U54) in all tRNAs, and that of position 341 (m5U341) in tmRNA (transfer-mRNA). This Shigella flexneri serotype 5b (strain 8401) protein is tRNA/tmRNA (uracil-C(5))-methyltransferase.